Reading from the N-terminus, the 165-residue chain is Lipoprotein signal peptidase (165 aa).

3 consecutive transmembrane segments (helical) span residues 9 to 29 (FLAI…VLLY), 69 to 89 (KYFL…FLFL), and 98 to 118 (IRFS…DIVF). Catalysis depends on residues aspartate 124 and aspartate 142. The chain crosses the membrane as a helical span at residues 133–153 (WFFPTFNFADIFISLGTLIFI).

This sequence belongs to the peptidase A8 family.

Its subcellular location is the cell inner membrane. It carries out the reaction Release of signal peptides from bacterial membrane prolipoproteins. Hydrolyzes -Xaa-Yaa-Zaa-|-(S,diacylglyceryl)Cys-, in which Xaa is hydrophobic (preferably Leu), and Yaa (Ala or Ser) and Zaa (Gly or Ala) have small, neutral side chains.. It participates in protein modification; lipoprotein biosynthesis (signal peptide cleavage). Functionally, this protein specifically catalyzes the removal of signal peptides from prolipoproteins. The chain is Lipoprotein signal peptidase from Chlamydia abortus (strain DSM 27085 / S26/3) (Chlamydophila abortus).